A 56-amino-acid chain; its full sequence is Large ribosomal subunit protein bL33 (56 aa).

Belongs to the bacterial ribosomal protein bL33 family.

This chain is Large ribosomal subunit protein bL33, found in Actinobacillus succinogenes (strain ATCC 55618 / DSM 22257 / CCUG 43843 / 130Z).